The primary structure comprises 348 residues: Isopentenyl-diphosphate delta-isomerase (348 aa).

9–10 (RK) lines the substrate pocket. FMN contacts are provided by residues 68 to 70 (AMT), serine 98, and asparagine 127. Residue glutamine 157 participates in substrate binding. Glutamate 158 contacts Mg(2+). FMN contacts are provided by residues lysine 188, serine 213, threonine 218, and 286 to 287 (AG).

It belongs to the IPP isomerase type 2 family. As to quaternary structure, homooctamer. Dimer of tetramers. FMN serves as cofactor. Requires NADPH as cofactor. It depends on Mg(2+) as a cofactor.

It is found in the cytoplasm. It catalyses the reaction isopentenyl diphosphate = dimethylallyl diphosphate. Functionally, involved in the biosynthesis of isoprenoids. Catalyzes the 1,3-allylic rearrangement of the homoallylic substrate isopentenyl (IPP) to its allylic isomer, dimethylallyl diphosphate (DMAPP). The polypeptide is Isopentenyl-diphosphate delta-isomerase (Limosilactobacillus reuteri (strain DSM 20016) (Lactobacillus reuteri)).